The primary structure comprises 427 residues: Gustatory receptor for sugar taste 43a (427 aa).

Over 1–37 the chain is Cytoplasmic; sequence MEISQPSIGIFYISKVLALAPYATVRNSKGRVEIGRS. The helical transmembrane segment at 38–63 threads the bilayer; that stretch reads WLFTVYSATLTVVMVFLTYRGLLFDA. At 64–75 the chain is on the extracellular side; that stretch reads NSEIPVRMKSAT. 2 residues coordinate beta-D-fructose: Arg-70 and Asp-83. Residues 76-96 form a helical membrane-spanning segment; the sequence is SKVVTALDVSVVVMAIVSGVY. Residues 97–135 lie on the Cytoplasmic side of the membrane; that stretch reads CGLFSLNDTLELNDRLNKIDNTLNAYNNFRRDRWRALGM. Residues 136–158 form a helical membrane-spanning segment; sequence AAVSLLAISILVGLDVGTWMRIA. Topologically, residues 159–168 are extracellular; it reads QDMNIAQSDT. Residues 169 to 193 traverse the membrane as a helical segment; that stretch reads ELNVHWYIPFYSLYFILTGLQVNIA. Tyr-182 contacts beta-D-fructose. The Cytoplasmic portion of the chain corresponds to 194–293; sequence NTAYGLGRRF…CVHLLSNSFG (100 aa). The chain crosses the membrane as a helical span at residues 294–316; sequence IAVLFILVSCLLHLVATAYFLFL. A beta-D-fructose-binding site is contributed by Thr-310. The Extracellular portion of the chain corresponds to 317–324; sequence ELLSKRDN. The chain crosses the membrane as a helical span at residues 325–346; it reads GYLWVQMLWICFHFLRLLMVVE. A beta-D-fructose-binding site is contributed by His-337. Topologically, residues 347–402 are cytoplasmic; sequence PCHLAARESRKTIQIVCEIERKVHEPILAEAVKKFWQQLLVVDADFSACGLCRVNR. A helical transmembrane segment spans residues 403–423; that stretch reads TILTSFASAIATYLVILIQFQ. Gln-421 provides a ligand contact to Ca(2+). Over 424–427 the chain is Extracellular; it reads RTNG.

The protein belongs to the insect chemoreceptor superfamily. Gustatory receptor (GR) family. Gr21a subfamily. Homotetramer. As to expression, expressed in the adult labellar chemosensory neurons and in the adult head, abdomen, leg and wing. In larvae, is expressed in taste organs, as well as the brain and the gastrointestinal system.

It localises to the cell membrane. Functionally, gustatory receptor which mediates acceptance or avoidance behavior, depending on its substrates. Gr43a is the main sugar receptor in larvae. Functions as a narrowly tuned fructose receptor in taste neurons but also as a fructose receptor in the brain. Necessary and sufficient to sense hemolymph fructose and promote feeding in hungry flies but suppress feeding in satiated flies. This chain is Gustatory receptor for sugar taste 43a (Gr43a), found in Drosophila melanogaster (Fruit fly).